A 100-amino-acid polypeptide reads, in one-letter code: Urease subunit gamma (100 aa).

The protein belongs to the urease gamma subunit family. In terms of assembly, heterotrimer of UreA (gamma), UreB (beta) and UreC (alpha) subunits. Three heterotrimers associate to form the active enzyme.

Its subcellular location is the cytoplasm. It carries out the reaction urea + 2 H2O + H(+) = hydrogencarbonate + 2 NH4(+). Its pathway is nitrogen metabolism; urea degradation; CO(2) and NH(3) from urea (urease route): step 1/1. The chain is Urease subunit gamma from Pseudomonas fluorescens (strain ATCC BAA-477 / NRRL B-23932 / Pf-5).